The following is a 471-amino-acid chain: MPAPQRKHRRGGFSHRCFPTPQTAMTPQPAGPPDGGWGWVVAAAAFAINGLSYGLLRSLGLAFPDLAEHFDRSAQDTAWISALALAVQQAASPVGSALSTRWGARPVVMVGGVLASLGFVFSAFASDLLHLYLGLGLLAGFGWALVFAPALGTLSRYFSRRRVLAVGLALTGNGASSLLLAPALQLLLDTFGWRGALLLLGAITLHLTPCGALLLPLVLPGDPPAPPRSPLAALGLSLFTRRAFSIFALGTALVGGGYFVPYVHLAPHALDRGLGGYGAALVVAVAAMGDAGARLVCGWLADQGWVPLPRLLAVFGALTGLGLWVVGLVPVVGGEESWGGPLLAAAVAYGLSAGSYAPLVFGVLPGLVGVGGVVQATGLVMMLMSLGGLLGPPLSGFLRDETGDFTASFLLSGSLILSGSFIYIGLPRALPSCGPASPPATPPPETGELLPAPQAVLLSPGGPGSTLDTTC.

A compositionally biased stretch (basic residues) spans 1-13; the sequence is MPAPQRKHRRGGF. A disordered region spans residues 1–31; that stretch reads MPAPQRKHRRGGFSHRCFPTPQTAMTPQPAG. The Cytoplasmic portion of the chain corresponds to 1 to 35; that stretch reads MPAPQRKHRRGGFSHRCFPTPQTAMTPQPAGPPDG. Over residues 19–28 the composition is skewed to low complexity; the sequence is PTPQTAMTPQ. 12 helical membrane passes run 36–56, 78–98, 106–126, 131–151, 163–183, 198–218, 243–263, 273–293, 312–332, 333–353, 367–389, and 407–427; these read GWGW…YGLL, AWIS…GSAL, PVVM…AFAS, LYLG…APAL, VLAV…LAPA, LLLG…LPLV, AFSI…VPYV, GLGG…DAGA, LAVF…VPVV, GGEE…GLSA, LVGV…LGGL, and ASFL…IGLP. Over 428–471 the chain is Cytoplasmic; it reads RALPSCGPASPPATPPPETGELLPAPQAVLLSPGGPGSTLDTTC.

It belongs to the major facilitator superfamily. Monocarboxylate porter (TC 2.A.1.13) family. Interacts with isoform 2 of BSG. As to expression, expressed in liver, salivary gland and thyroid.

It is found in the endoplasmic reticulum membrane. Its subcellular location is the cell membrane. The catalysed reaction is pyruvate(out) + H(+)(out) = pyruvate(in) + H(+)(in). Proton-linked monocarboxylate transporter. It catalyzes the transport of pyruvate across the plasma membrane. Probably involved in hepatic lipid metabolism: overexpression results in an increase of triacylglycerol(TAG) levels, small increases in intracellular diacylglycerols and decreases in lysophosphatidylcholine, cholesterol ester and sphingomyelin lipids. In Homo sapiens (Human), this protein is Monocarboxylate transporter 11 (SLC16A11).